Consider the following 231-residue polypeptide: Ion-translocating oxidoreductase complex subunit E (231 aa).

Helical transmembrane passes span 18 to 38 (GLVQLLGLCPLLAVTATITNA), 39 to 59 (LGLGVATLLVLIGSNVLVSLV), 69 to 89 (IPVFVMIIAALVTCVQLLINA), 93 to 113 (NLYLSLGIFLPLIVTNCVIIG), 127 to 147 (SAFDGLMMGLGFTAVLVVLGA), 157 to 177 (LFGGADLLLGDWASVLTIHVW), and 182 to 202 (PFLLAMLPPGAFIGMGLLIAL).

It belongs to the NqrDE/RnfAE family. In terms of assembly, the complex is composed of six subunits: RnfA, RnfB, RnfC, RnfD, RnfE and RnfG.

The protein localises to the cell inner membrane. Part of a membrane-bound complex that couples electron transfer with translocation of ions across the membrane. The polypeptide is Ion-translocating oxidoreductase complex subunit E (Shewanella frigidimarina (strain NCIMB 400)).